A 93-amino-acid polypeptide reads, in one-letter code: Large ribosomal subunit protein uL23 (93 aa).

The protein belongs to the universal ribosomal protein uL23 family. In terms of assembly, part of the 50S ribosomal subunit. Contacts protein L29, and trigger factor when it is bound to the ribosome.

Functionally, one of the early assembly proteins it binds 23S rRNA. One of the proteins that surrounds the polypeptide exit tunnel on the outside of the ribosome. Forms the main docking site for trigger factor binding to the ribosome. The sequence is that of Large ribosomal subunit protein uL23 from Nautilia profundicola (strain ATCC BAA-1463 / DSM 18972 / AmH).